A 295-amino-acid chain; its full sequence is F-box protein SKIP24 (295 aa).

Residues 19–66 form the F-box; degenerate domain; that stretch reads VKSSTFSYKDLCCISISSRRLFRLSCDDSLWDLLLVHDFPNHIVSASS. Coiled coils occupy residues 82–129 and 167–209; these read REKE…SSLQ and EGRL…ESMK. The disordered stretch occupies residues 217-245; it reads KSIRNGDQGSNGKTKKLKTSINYSGDQVS. Residues 235–245 are compositionally biased toward polar residues; sequence TSINYSGDQVS.

In terms of assembly, part of a SCF (ASK-cullin-F-box) protein ligase complex. Interacts with SKP1A/ASK1 and SPK1B/ASK2.

The protein operates within protein modification; protein ubiquitination. Its function is as follows. Component of SCF(ASK-cullin-F-box) E3 ubiquitin ligase complexes, which may mediate the ubiquitination and subsequent proteasomal degradation of target proteins. The polypeptide is F-box protein SKIP24 (SKIP24) (Arabidopsis thaliana (Mouse-ear cress)).